A 309-amino-acid chain; its full sequence is tRNA N6-adenosine threonylcarbamoyltransferase (309 aa).

Fe cation-binding residues include histidine 108 and histidine 112. Substrate-binding positions include 130–134, aspartate 163, glycine 176, aspartate 180, and asparagine 269; that span reads LVSGG. Aspartate 293 is a Fe cation binding site.

The protein belongs to the KAE1 / TsaD family. Fe(2+) is required as a cofactor.

The protein resides in the cytoplasm. It carries out the reaction L-threonylcarbamoyladenylate + adenosine(37) in tRNA = N(6)-L-threonylcarbamoyladenosine(37) in tRNA + AMP + H(+). Required for the formation of a threonylcarbamoyl group on adenosine at position 37 (t(6)A37) in tRNAs that read codons beginning with adenine. Is involved in the transfer of the threonylcarbamoyl moiety of threonylcarbamoyl-AMP (TC-AMP) to the N6 group of A37, together with TsaE and TsaB. TsaD likely plays a direct catalytic role in this reaction. In Mycoplasmopsis agalactiae (strain NCTC 10123 / CIP 59.7 / PG2) (Mycoplasma agalactiae), this protein is tRNA N6-adenosine threonylcarbamoyltransferase.